Here is a 637-residue protein sequence, read N- to C-terminus: Chaperone protein HtpG (637 aa).

The tract at residues 1–345 (MSQQETHGFQ…SNDLPLNVSR (345 aa)) is a; substrate-binding. Residues 346-562 (EILQDNHITK…EGEMSTQMIK (217 aa)) are b. The segment at 563–637 (LMQAAGQPVP…MNQMLLANLK (75 aa)) is c.

The protein belongs to the heat shock protein 90 family. As to quaternary structure, homodimer.

The protein localises to the cytoplasm. Molecular chaperone. Has ATPase activity. The protein is Chaperone protein HtpG of Shewanella oneidensis (strain ATCC 700550 / JCM 31522 / CIP 106686 / LMG 19005 / NCIMB 14063 / MR-1).